A 436-amino-acid polypeptide reads, in one-letter code: MEKLSERFSALQEKLMDLYESGVEDLETQIQHWKLLRQEQVLFYYARRHGILRLGYQPVPTLATSESKAKDAIAMGLLLESLQKSQYAEEPWTLVETSLETVKSPPADCFKKGPKSVEVYFDGDPENVMSYTVWSYIYYQTDDESWEKVEGHVDYTGAYYIEGTFKTYYIKFETDAKRYGTTGHWEVHVNKDTVFTPVTSSTPPVGVASQNSAPEPASTSDSPQRSSQVTHRYGRKASSPTITTIRRQKRRERQRQETPTRRRKTRSRSRSTEQRGGRATRRSLSRESAESPRRGGRGGGGPLTRSRSRSRSRTRESVDGGGVAPDEVGATLRSIGRQHSGRLAQLLDAAKDPPVILLRGAANTLKCYRYRFRKKHAGSFQFISTTWSWVGGHTTDRIGRSRILISFHTDREREKCLQQMKLPLGVEWSYGQFDDL.

The transactivation domain stretch occupies residues 1 to 201; that stretch reads MEKLSERFSA…DTVFTPVTSS (201 aa). The segment covering 195–209 has biased composition (low complexity); it reads FTPVTSSTPPVGVAS. Residues 195-328 form a disordered region; that stretch reads FTPVTSSTPP…DGGGVAPDEV (134 aa). Residues 210-230 are compositionally biased toward polar residues; the sequence is QNSAPEPASTSDSPQRSSQVT. A compositionally biased stretch (basic and acidic residues) spans 284 to 293; it reads LSRESAESPR. The interval 352 to 436 is DNA-binding domain; it reads DPPVILLRGA…EWSYGQFDDL (85 aa).

The protein belongs to the papillomaviridae E2 protein family. In terms of assembly, binds DNA as homodimer. Interacts with protein E1; this interaction greatly increases E1 DNA-binding activity. Interacts with protein L1; this interaction enhances E2-dependent replication and transcription activation. Interacts with protein L2; this interaction inhibits E2 transcriptional activity but not DNA replication function E2. Interacts with protein E7; this interaction inhibits E7 oncogenic activity. Interacts with host TAF1; this interaction modulates E2-dependent transcriptional regulation. Interacts with host BRD4; this interaction mediates E2 transcriptional activation function. Additionally, the interaction with host BRD4 on mitotic chromosomes mediates tethering of the viral genome. Interacts with host TOPBP1; this interaction is required for optimal viral DNA replication. Post-translationally, phosphorylated.

It localises to the host nucleus. Plays a role in the initiation of viral DNA replication. A dimer of E2 interacts with a dimer of E1 in order to improve specificity of E1 DNA binding activity. Once the complex recognizes and binds DNA at specific sites, the E2 dimer is removed from DNA. E2 also regulates viral transcription through binding to the E2RE response element (5'-ACCNNNNNNGGT-3') present in multiple copies in the regulatory regions of the viral genome. Activates or represses transcription depending on E2RE's position with regards to proximal promoter elements including the TATA-box. Repression occurs by sterically hindering the assembly of the transcription initiation complex. In Human papillomavirus 22, this protein is Regulatory protein E2.